A 231-amino-acid polypeptide reads, in one-letter code: Transcriptional regulatory protein KdpE (231 aa).

Residues 4 to 117 (KILIIEDDHA…ELRARIRVIE (114 aa)) enclose the Response regulatory domain. At D53 the chain carries 4-aspartylphosphate. Positions 127-227 (NIVFTNGLLS…HPRIGYQMLQ (101 aa)) form a DNA-binding region, ompR/PhoB-type.

Phosphorylated by KdpD. Phosphorylation is required for transcriptional activity.

Functionally, member of the two-component regulatory system KdpD/KdpE that regulates the transcription of a series of virulence factors through sensing external K(+) concentrations. Also regulates capsular polysaccharide synthesis. Upon phosphorylation by KpdD, functions as a transcriptional regulator by direct binding to promoter regions of target genes including spa, hla, aur and geh. Represses the transcription of kdpFABC operon. The chain is Transcriptional regulatory protein KdpE from Staphylococcus aureus (strain NCTC 8325 / PS 47).